Reading from the N-terminus, the 186-residue chain is UPF0301 protein CGSHiEE_01530 (186 aa).

It belongs to the UPF0301 (AlgH) family.

The chain is UPF0301 protein CGSHiEE_01530 from Haemophilus influenzae (strain PittEE).